Reading from the N-terminus, the 596-residue chain is Probable lysosomal cobalamin transporter (596 aa).

The next 10 membrane-spanning stretches (helical) occupy residues I13–F33, V45–V65, V99–A119, L150–G170, L201–L221, L318–T338, G353–A373, I381–I401, I425–V445, and V512–F532. An N-linked (GlcNAc...) asparagine glycan is attached at N543. Residues G576–G596 form a disordered region. The span at Y584–G596 shows a compositional bias: gly residues.

This sequence belongs to the LIMR family. LMBRD1 subfamily.

It localises to the lysosome membrane. Probable lysosomal cobalamin transporter. Required to export cobalamin from lysosomes allowing its conversion to cofactors. The chain is Probable lysosomal cobalamin transporter from Podospora anserina (strain S / ATCC MYA-4624 / DSM 980 / FGSC 10383) (Pleurage anserina).